Consider the following 489-residue polypeptide: MTFRNCVAVDLGASSGRVMLARYERECRSLTLREIHRFNNGLHSQNGYVTWDVDSLESAIRLGLNKVCEEGIRIDSIGIDTWGVDFVLLDQQGQRVGLPVAYRDSRTNGLMAQAQQQLGKRDIYQRSGIQFLPFNTIYQLRALTEQQPELIPHIAHALLMADYFSYRLTGEMNWEYTNATTTQLVNINSDDWDESLLAWSGANKAWFGRPTHPGNVIGHWICPQGNEIPVVAVASHDTASAVIASPLSGSRAAYLSSGTWSLMGFESQTPFTNDTALAANITNEGGAEGRYRVLKNIMGLWLLQRVLQERQINDLPALIAATQALPACRFTINPNDDRFINPDEMCSEIQAACRETAQPIPESDAELARCIFDSLALLYADVLHELAQLRGEDFSQLHIVGGGCQNALLNQLCADACGIRVIAGPVEASTLGNIGIQLMTLDELNNVDDFRQVVSTTANLTTFTPNPDSEIAHYVAQIHSTRQTKELCA.

13–17 (ASSGR) contributes to the ATP binding site. Cys68 and Cys222 are oxidised to a cystine. Substrate-binding positions include Gly83 and 236-238 (HDT). The active-site Proton acceptor is Asp237. Thr259 lines the ATP pocket. Substrate is bound at residue Asn296. ATP is bound at residue Gln304. Cysteines 353 and 370 form a disulfide. Gly402 provides a ligand contact to ATP. A disulfide bridge links Cys413 with Cys417.

The protein belongs to the rhamnulokinase family. Monomer. Mg(2+) serves as cofactor.

It carries out the reaction L-rhamnulose + ATP = L-rhamnulose 1-phosphate + ADP + H(+). It participates in carbohydrate degradation; L-rhamnose degradation; glycerone phosphate from L-rhamnose: step 2/3. Functionally, involved in the catabolism of L-rhamnose (6-deoxy-L-mannose). Catalyzes the transfer of the gamma-phosphate group from ATP to the 1-hydroxyl group of L-rhamnulose to yield L-rhamnulose 1-phosphate. This chain is Rhamnulokinase, found in Escherichia coli O17:K52:H18 (strain UMN026 / ExPEC).